We begin with the raw amino-acid sequence, 417 residues long: Glutamyl-tRNA(Gln) amidotransferase subunit D (417 aa).

One can recognise an Asparaginase/glutaminase domain in the interval 73–400 (EKVWLLATGG…EEVPRVLTTP (328 aa)). Active-site residues include Thr83, Thr157, Asp158, and Lys236.

This sequence belongs to the asparaginase 1 family. GatD subfamily. Heterodimer of GatD and GatE.

The enzyme catalyses L-glutamyl-tRNA(Gln) + L-glutamine + ATP + H2O = L-glutaminyl-tRNA(Gln) + L-glutamate + ADP + phosphate + H(+). Its function is as follows. Allows the formation of correctly charged Gln-tRNA(Gln) through the transamidation of misacylated Glu-tRNA(Gln) in organisms which lack glutaminyl-tRNA synthetase. The reaction takes place in the presence of glutamine and ATP through an activated gamma-phospho-Glu-tRNA(Gln). The GatDE system is specific for glutamate and does not act on aspartate. The protein is Glutamyl-tRNA(Gln) amidotransferase subunit D of Pyrobaculum aerophilum (strain ATCC 51768 / DSM 7523 / JCM 9630 / CIP 104966 / NBRC 100827 / IM2).